Here is a 250-residue protein sequence, read N- to C-terminus: Adenosylcobinamide-GDP ribazoletransferase (250 aa).

6 helical membrane-spanning segments follow: residues 31 to 51 (ISYL…VYFV), 55 to 75 (FILG…ITGA), 106 to 126 (VGTN…AVLN), 133 to 153 (IIIA…LLMC), 187 to 207 (IGYV…VLFI), and 230 to 250 (NEIA…CGLL).

The protein belongs to the CobS family. Mg(2+) is required as a cofactor.

The protein localises to the cell membrane. It carries out the reaction alpha-ribazole + adenosylcob(III)inamide-GDP = adenosylcob(III)alamin + GMP + H(+). The enzyme catalyses alpha-ribazole 5'-phosphate + adenosylcob(III)inamide-GDP = adenosylcob(III)alamin 5'-phosphate + GMP + H(+). Its pathway is cofactor biosynthesis; adenosylcobalamin biosynthesis; adenosylcobalamin from cob(II)yrinate a,c-diamide: step 7/7. In terms of biological role, joins adenosylcobinamide-GDP and alpha-ribazole to generate adenosylcobalamin (Ado-cobalamin). Also synthesizes adenosylcobalamin 5'-phosphate from adenosylcobinamide-GDP and alpha-ribazole 5'-phosphate. This is Adenosylcobinamide-GDP ribazoletransferase from Clostridium novyi (strain NT).